The following is a 614-amino-acid chain: Phosphomethylpyrimidine synthase (614 aa).

Substrate contacts are provided by residues Asn-230, Met-259, Tyr-288, His-324, 344–346 (SRG), 385–388 (DGLR), and Glu-424. His-428 lines the Zn(2+) pocket. Tyr-451 is a binding site for substrate. A Zn(2+)-binding site is contributed by His-492. Positions 572, 575, and 580 each coordinate [4Fe-4S] cluster.

Belongs to the ThiC family. As to quaternary structure, homodimer. The cofactor is [4Fe-4S] cluster.

The catalysed reaction is 5-amino-1-(5-phospho-beta-D-ribosyl)imidazole + S-adenosyl-L-methionine = 4-amino-2-methyl-5-(phosphooxymethyl)pyrimidine + CO + 5'-deoxyadenosine + formate + L-methionine + 3 H(+). It functions in the pathway cofactor biosynthesis; thiamine diphosphate biosynthesis. Its function is as follows. Catalyzes the synthesis of the hydroxymethylpyrimidine phosphate (HMP-P) moiety of thiamine from aminoimidazole ribotide (AIR) in a radical S-adenosyl-L-methionine (SAM)-dependent reaction. This Stenotrophomonas maltophilia (strain K279a) protein is Phosphomethylpyrimidine synthase.